A 254-amino-acid polypeptide reads, in one-letter code: Tryptophan synthase alpha chain (254 aa).

Active-site proton acceptor residues include E48 and D59.

Belongs to the TrpA family. Tetramer of two alpha and two beta chains.

The catalysed reaction is (1S,2R)-1-C-(indol-3-yl)glycerol 3-phosphate + L-serine = D-glyceraldehyde 3-phosphate + L-tryptophan + H2O. It functions in the pathway amino-acid biosynthesis; L-tryptophan biosynthesis; L-tryptophan from chorismate: step 5/5. Functionally, the alpha subunit is responsible for the aldol cleavage of indoleglycerol phosphate to indole and glyceraldehyde 3-phosphate. The sequence is that of Tryptophan synthase alpha chain from Desulfotalea psychrophila (strain LSv54 / DSM 12343).